We begin with the raw amino-acid sequence, 396 residues long: Proteasome-activating nucleotidase (396 aa).

Residues 16–57 (VTYLKRRIRQLELQVRMLEADKERLERELSRLRSEMSRLRQP) adopt a coiled-coil conformation. ATP is bound by residues 181-186 (GCGKTL) and His-320. Positions 394-396 (IYG) are docks into pockets in the proteasome alpha-ring to cause gate opening.

The protein belongs to the AAA ATPase family. As to quaternary structure, homohexamer. The hexameric complex has a two-ring architecture resembling a top hat that caps the 20S proteasome core at one or both ends. Upon ATP-binding, the C-terminus of PAN interacts with the alpha-rings of the proteasome core by binding to the intersubunit pockets.

The protein localises to the cytoplasm. ATPase which is responsible for recognizing, binding, unfolding and translocation of substrate proteins into the archaeal 20S proteasome core particle. Is essential for opening the gate of the 20S proteasome via an interaction with its C-terminus, thereby allowing substrate entry and access to the site of proteolysis. Thus, the C-termini of the proteasomal ATPase function like a 'key in a lock' to induce gate opening and therefore regulate proteolysis. Unfolding activity requires energy from ATP hydrolysis, whereas ATP binding alone promotes ATPase-20S proteasome association which triggers gate opening, and supports translocation of unfolded substrates. The polypeptide is Proteasome-activating nucleotidase (Pyrococcus furiosus (strain ATCC 43587 / DSM 3638 / JCM 8422 / Vc1)).